A 1610-amino-acid polypeptide reads, in one-letter code: Adenylate cyclase type 10 (1610 aa).

2 consecutive Guanylate cyclase domains span residues 42–179 and 293–418; these read VLMF…RLAQ and TIVF…ARMM. The Mg(2+) site is built by Asp47 and Ile48. 47 to 52 is a binding site for ATP; it reads DISGFT. Position 95 (Lys95) interacts with hydrogencarbonate. Asp99 lines the Mg(2+) pocket. ATP contacts are provided by Asp99 and Lys144. Hydrogencarbonate-binding residues include Val167, Arg176, and Met337. Residues Val406 and 412 to 416 contribute to the ATP site; that span reads NIAAR.

It belongs to the adenylyl cyclase class-4/guanylyl cyclase family. Requires Mg(2+) as cofactor. Mn(2+) is required as a cofactor.

Its subcellular location is the cell membrane. The protein localises to the cytoplasm. It localises to the cytoskeleton. It is found in the perinuclear region. The protein resides in the nucleus. Its subcellular location is the cell projection. The protein localises to the cilium. It catalyses the reaction ATP = 3',5'-cyclic AMP + diphosphate. Activated by manganese or magnesium ions. In the presence of magnesium ions, the enzyme is activated by bicarbonate. Calcium mildly increases the enzyme activity, also in the presence of magnesium ions. Catalyzes the formation of the signaling molecule cAMP. May function as sensor that mediates responses to changes in cellular bicarbonate and CO(2) levels. Has a critical role in mammalian spermatogenesis by producing the cAMP which regulates cAMP-responsive nuclear factors indispensable for sperm maturation in the epididymis. Induces capacitation, the maturational process that sperm undergo prior to fertilization. Involved in ciliary beat regulation. This chain is Adenylate cyclase type 10 (ADCY10), found in Oryctolagus cuniculus (Rabbit).